The following is a 168-amino-acid chain: Chorismate pyruvate-lyase (168 aa).

The substrate site is built by Met-36, Arg-78, Leu-116, and Glu-157.

This sequence belongs to the UbiC family. As to quaternary structure, monomer.

The protein resides in the cytoplasm. It carries out the reaction chorismate = 4-hydroxybenzoate + pyruvate. It participates in cofactor biosynthesis; ubiquinone biosynthesis. Removes the pyruvyl group from chorismate, with concomitant aromatization of the ring, to provide 4-hydroxybenzoate (4HB) for the ubiquinone pathway. This chain is Chorismate pyruvate-lyase, found in Photorhabdus laumondii subsp. laumondii (strain DSM 15139 / CIP 105565 / TT01) (Photorhabdus luminescens subsp. laumondii).